We begin with the raw amino-acid sequence, 353 residues long: DNA polymerase IV (353 aa).

Positions 6-187 constitute a UmuC domain; that stretch reads IIHIDCDCFY…LPVTKLHGVG (182 aa). 2 residues coordinate Mg(2+): D10 and D105. Residue E106 is part of the active site.

The protein belongs to the DNA polymerase type-Y family. In terms of assembly, monomer. Mg(2+) is required as a cofactor.

Its subcellular location is the cytoplasm. The enzyme catalyses DNA(n) + a 2'-deoxyribonucleoside 5'-triphosphate = DNA(n+1) + diphosphate. In terms of biological role, poorly processive, error-prone DNA polymerase involved in untargeted mutagenesis. Copies undamaged DNA at stalled replication forks, which arise in vivo from mismatched or misaligned primer ends. These misaligned primers can be extended by PolIV. Exhibits no 3'-5' exonuclease (proofreading) activity. May be involved in translesional synthesis, in conjunction with the beta clamp from PolIII. This chain is DNA polymerase IV, found in Pseudomonas syringae pv. tomato (strain ATCC BAA-871 / DC3000).